The sequence spans 344 residues: MNTPVRLTQYSHGAGCGCKISPKVLEIILAGSGAQNLDPRLWVGNASRDDAAVYALDDQRGVVSTTDFFMPIVDDPFDFGRIAATNAISDIYAMGGDPLLAIAILGWPVNVLPPEVAREVVRGGRAACDEAGIALAGGHSIDAPEPIFGLAVTGVVDKARLKRNDTATAGCRLYLTKPLGIGILTTAEKKSRLRPEDVNLARDWMCTLNKPGSRFGALAGVKAMTDVTGFGLLGHLVEMADGSGVSARIEYAKVPRLPGVEHYLAEGCVPGGTGRNFDSYGARIAPLPQDRVDLLCDPQTSGGLLVAVEPAGEAEFLAAAGELGLRLEPIGELVAQRPYAVEVL.

Residue C16 is part of the active site. ATP is bound by residues K19 and S47–D49. D50 serves as a coordination point for Mg(2+). Residues D67, D90, and G138–S140 each bind ATP. A Mg(2+)-binding site is contributed by D90. D226 is a Mg(2+) binding site.

This sequence belongs to the selenophosphate synthase 1 family. Class I subfamily. In terms of assembly, homodimer. Mg(2+) is required as a cofactor.

It catalyses the reaction hydrogenselenide + ATP + H2O = selenophosphate + AMP + phosphate + 2 H(+). In terms of biological role, synthesizes selenophosphate from selenide and ATP. The polypeptide is Selenide, water dikinase (Bordetella bronchiseptica (strain ATCC BAA-588 / NCTC 13252 / RB50) (Alcaligenes bronchisepticus)).